Consider the following 537-residue polypeptide: CTP synthase (537 aa).

Positions 1–268 are amidoligase domain; it reads MSFKCIFLTG…STFITEKLGL (268 aa). Residue Ser14 participates in CTP binding. Residue Ser14 coordinates UTP. An ATP-binding site is contributed by 15–20; that stretch reads SLGKGL. Tyr55 is a binding site for L-glutamine. Asp72 lines the ATP pocket. Positions 72 and 142 each coordinate Mg(2+). CTP is bound by residues 149-151, 188-193, and Lys224; these read DIE and KTKPTQ. UTP-binding positions include 188–193 and Lys224; that span reads KTKPTQ. Residues 294-533 form the Glutamine amidotransferase type-1 domain; it reads RLGLVGKYVQ…IEAALLHSRN (240 aa). L-glutamine is bound at residue Gly353. Cys380 serves as the catalytic Nucleophile; for glutamine hydrolysis. Residues 381-384, Glu404, and Arg461 each bind L-glutamine; that span reads LGMQ. Residues His506 and Glu508 contribute to the active site.

Belongs to the CTP synthase family. As to quaternary structure, homotetramer.

It carries out the reaction UTP + L-glutamine + ATP + H2O = CTP + L-glutamate + ADP + phosphate + 2 H(+). It catalyses the reaction L-glutamine + H2O = L-glutamate + NH4(+). The enzyme catalyses UTP + NH4(+) + ATP = CTP + ADP + phosphate + 2 H(+). Its pathway is pyrimidine metabolism; CTP biosynthesis via de novo pathway; CTP from UDP: step 2/2. With respect to regulation, allosterically activated by GTP, when glutamine is the substrate; GTP has no effect on the reaction when ammonia is the substrate. The allosteric effector GTP functions by stabilizing the protein conformation that binds the tetrahedral intermediate(s) formed during glutamine hydrolysis. Inhibited by the product CTP, via allosteric rather than competitive inhibition. Catalyzes the ATP-dependent amination of UTP to CTP with either L-glutamine or ammonia as the source of nitrogen. Regulates intracellular CTP levels through interactions with the four ribonucleotide triphosphates. This Chlamydia abortus (strain DSM 27085 / S26/3) (Chlamydophila abortus) protein is CTP synthase.